Here is a 1040-residue protein sequence, read N- to C-terminus: Isoleucine--tRNA ligase (1040 aa).

The short motif at 47–57 (PYCSGSIHLGT) is the 'HIGH' region element. Residues 605-609 (KMSKS) carry the 'KMSKS' region motif. ATP is bound at residue lysine 608.

It belongs to the class-I aminoacyl-tRNA synthetase family. IleS type 2 subfamily. In terms of assembly, monomer. Zn(2+) serves as cofactor.

The protein localises to the cytoplasm. It carries out the reaction tRNA(Ile) + L-isoleucine + ATP = L-isoleucyl-tRNA(Ile) + AMP + diphosphate. Catalyzes the attachment of isoleucine to tRNA(Ile). As IleRS can inadvertently accommodate and process structurally similar amino acids such as valine, to avoid such errors it has two additional distinct tRNA(Ile)-dependent editing activities. One activity is designated as 'pretransfer' editing and involves the hydrolysis of activated Val-AMP. The other activity is designated 'posttransfer' editing and involves deacylation of mischarged Val-tRNA(Ile). This is Isoleucine--tRNA ligase from Methanococcus aeolicus (strain ATCC BAA-1280 / DSM 17508 / OCM 812 / Nankai-3).